The primary structure comprises 155 residues: Ribosome maturation factor RimP (155 aa).

The protein belongs to the RimP family.

It localises to the cytoplasm. In terms of biological role, required for maturation of 30S ribosomal subunits. The chain is Ribosome maturation factor RimP from Prochlorococcus marinus (strain MIT 9312).